Here is an 84-residue protein sequence, read N- to C-terminus: Large ribosomal subunit protein bL27 (84 aa).

Positions 1–21 are disordered; the sequence is MAHKKGVGSSRNGRDSDGQRL.

The protein belongs to the bacterial ribosomal protein bL27 family.

This is Large ribosomal subunit protein bL27 from Trichlorobacter lovleyi (strain ATCC BAA-1151 / DSM 17278 / SZ) (Geobacter lovleyi).